The following is a 283-amino-acid chain: Acetylglutamate kinase (283 aa).

Residues 64–65 (GG), R86, and N181 each bind substrate.

It belongs to the acetylglutamate kinase family. ArgB subfamily.

Its subcellular location is the cytoplasm. It carries out the reaction N-acetyl-L-glutamate + ATP = N-acetyl-L-glutamyl 5-phosphate + ADP. It participates in amino-acid biosynthesis; L-arginine biosynthesis; N(2)-acetyl-L-ornithine from L-glutamate: step 2/4. Functionally, catalyzes the ATP-dependent phosphorylation of N-acetyl-L-glutamate. This is Acetylglutamate kinase from Sulfurimonas denitrificans (strain ATCC 33889 / DSM 1251) (Thiomicrospira denitrificans (strain ATCC 33889 / DSM 1251)).